The primary structure comprises 175 residues: Succinate dehydrogenase assembly factor 2, mitochondrial (175 aa).

Residues 42 to 71 (PFSDPELAHANNSLPSNSEEWPLPEPLDRT) are disordered. Residues 51–60 (ANNSLPSNSE) are compositionally biased toward polar residues.

It belongs to the SDHAF2 family. As to quaternary structure, interacts with the flavoprotein subunit within the SDH catalytic dimer.

It is found in the mitochondrion matrix. Functionally, plays an essential role in the assembly of succinate dehydrogenase (SDH), an enzyme complex (also referred to as respiratory complex II) that is a component of both the tricarboxylic acid (TCA) cycle and the mitochondrial electron transport chain, and which couples the oxidation of succinate to fumarate with the reduction of ubiquinone (coenzyme Q) to ubiquinol. Required for flavinylation (covalent attachment of FAD) of the flavoprotein subunit of the SDH catalytic dimer. This chain is Succinate dehydrogenase assembly factor 2, mitochondrial, found in Cryptococcus neoformans var. neoformans serotype D (strain B-3501A) (Filobasidiella neoformans).